Reading from the N-terminus, the 210-residue chain is Putative methyltransferase ECU09_1500 (210 aa).

It belongs to the methyltransferase superfamily.

This is Putative methyltransferase ECU09_1500 from Encephalitozoon cuniculi (strain GB-M1) (Microsporidian parasite).